Here is a 65-residue protein sequence, read N- to C-terminus: Large ribosomal subunit protein bL28 (65 aa).

Belongs to the bacterial ribosomal protein bL28 family.

This is Large ribosomal subunit protein bL28 from Pseudothermotoga lettingae (strain ATCC BAA-301 / DSM 14385 / NBRC 107922 / TMO) (Thermotoga lettingae).